Reading from the N-terminus, the 110-residue chain is MVLLESEQFLTELTRLFQKCRLSGSVFITLKKYDGRTKPIPRKGSVEGFEPSDNKCLLRATDGKKKISTVVSSKEVNKFQMAYSNLLRANMDGLKKRDKKSKSKKSKAAQ.

Serine 45 is modified (phosphoserine). The tract at residues 90–110 (NMDGLKKRDKKSKSKKSKAAQ) is disordered. Residues 96 to 110 (KRDKKSKSKKSKAAQ) show a composition bias toward basic residues.

It belongs to the SRP14 family. As to quaternary structure, heterodimer with SRP9; binds RNA as heterodimer. Component of a signal recognition particle (SRP) complex that consists of a 7SL RNA molecule of 300 nucleotides and six protein subunits: SRP72, SRP68, SRP54, SRP19, SRP14 and SRP9.

The protein localises to the cytoplasm. Its function is as follows. Component of the signal recognition particle (SRP) complex, a ribonucleoprotein complex that mediates the cotranslational targeting of secretory and membrane proteins to the endoplasmic reticulum (ER). SRP9 together with SRP14 and the Alu portion of the SRP RNA, constitutes the elongation arrest domain of SRP. The complex of SRP9 and SRP14 is required for SRP RNA binding. The polypeptide is Signal recognition particle 14 kDa protein (SRP14) (Bos taurus (Bovine)).